Consider the following 108-residue polypeptide: Insulin-like peptide 17 (108 aa).

A signal peptide spans 1-19 (MFSTRGVLLLLSLMAAVAA).

The protein belongs to the insulin family. In terms of tissue distribution, expressed in head neurons and the uterus.

The protein localises to the secreted. Involved in the regulation of the larval diapause. The protein is Insulin-like peptide 17 of Caenorhabditis elegans.